The following is a 380-amino-acid chain: Queuine tRNA-ribosyltransferase (380 aa).

The active-site Proton acceptor is aspartate 96. Residues 96-100 (DSGGF), aspartate 150, glutamine 193, and glycine 220 each bind substrate. The segment at 251 to 257 (GVGAPDS) is RNA binding. The active-site Nucleophile is aspartate 270. An RNA binding; important for wobble base 34 recognition region spans residues 275–279 (TRIAR). Cysteine 308, cysteine 310, cysteine 313, and histidine 339 together coordinate Zn(2+).

It belongs to the queuine tRNA-ribosyltransferase family. As to quaternary structure, homodimer. Within each dimer, one monomer is responsible for RNA recognition and catalysis, while the other monomer binds to the replacement base PreQ1. Zn(2+) is required as a cofactor.

The catalysed reaction is 7-aminomethyl-7-carbaguanine + guanosine(34) in tRNA = 7-aminomethyl-7-carbaguanosine(34) in tRNA + guanine. It functions in the pathway tRNA modification; tRNA-queuosine biosynthesis. Functionally, catalyzes the base-exchange of a guanine (G) residue with the queuine precursor 7-aminomethyl-7-deazaguanine (PreQ1) at position 34 (anticodon wobble position) in tRNAs with GU(N) anticodons (tRNA-Asp, -Asn, -His and -Tyr). Catalysis occurs through a double-displacement mechanism. The nucleophile active site attacks the C1' of nucleotide 34 to detach the guanine base from the RNA, forming a covalent enzyme-RNA intermediate. The proton acceptor active site deprotonates the incoming PreQ1, allowing a nucleophilic attack on the C1' of the ribose to form the product. After dissociation, two additional enzymatic reactions on the tRNA convert PreQ1 to queuine (Q), resulting in the hypermodified nucleoside queuosine (7-(((4,5-cis-dihydroxy-2-cyclopenten-1-yl)amino)methyl)-7-deazaguanosine). In Streptococcus pyogenes serotype M6 (strain ATCC BAA-946 / MGAS10394), this protein is Queuine tRNA-ribosyltransferase.